Here is a 423-residue protein sequence, read N- to C-terminus: Gamma-glutamyl phosphate reductase (423 aa).

Belongs to the gamma-glutamyl phosphate reductase family.

It localises to the cytoplasm. The enzyme catalyses L-glutamate 5-semialdehyde + phosphate + NADP(+) = L-glutamyl 5-phosphate + NADPH + H(+). Its pathway is amino-acid biosynthesis; L-proline biosynthesis; L-glutamate 5-semialdehyde from L-glutamate: step 2/2. Catalyzes the NADPH-dependent reduction of L-glutamate 5-phosphate into L-glutamate 5-semialdehyde and phosphate. The product spontaneously undergoes cyclization to form 1-pyrroline-5-carboxylate. This is Gamma-glutamyl phosphate reductase from Pseudomonas putida (strain GB-1).